Reading from the N-terminus, the 126-residue chain is Protein ApaG (126 aa).

One can recognise an ApaG domain in the interval 2-126 (SALDTSIRVE…FRLATPGLLH (125 aa)).

The polypeptide is Protein ApaG (Shewanella baltica (strain OS223)).